Reading from the N-terminus, the 101-residue chain is Protein translation factor SUI1 homolog (101 aa).

The protein belongs to the SUI1 family.

The chain is Protein translation factor SUI1 homolog from Methanoregula boonei (strain DSM 21154 / JCM 14090 / 6A8).